The primary structure comprises 168 residues: Glycine-rich RNA-binding protein 2 (168 aa).

Residues tyrosine 8–serine 86 enclose the RRM domain. A disordered region spans residues glycine 148–asparagine 168.

In terms of biological role, possibly has a role in RNA transcription or processing during stress. The polypeptide is Glycine-rich RNA-binding protein 2 (GRP2) (Sorghum bicolor (Sorghum)).